The primary structure comprises 59 residues: Large ribosomal subunit protein uL30 (59 aa).

It belongs to the universal ribosomal protein uL30 family. In terms of assembly, part of the 50S ribosomal subunit.

The sequence is that of Large ribosomal subunit protein uL30 from Ruminiclostridium cellulolyticum (strain ATCC 35319 / DSM 5812 / JCM 6584 / H10) (Clostridium cellulolyticum).